Consider the following 96-residue polypeptide: Aspartyl/glutamyl-tRNA(Asn/Gln) amidotransferase subunit C (96 aa).

Belongs to the GatC family. Heterotrimer of A, B and C subunits.

It catalyses the reaction L-glutamyl-tRNA(Gln) + L-glutamine + ATP + H2O = L-glutaminyl-tRNA(Gln) + L-glutamate + ADP + phosphate + H(+). The enzyme catalyses L-aspartyl-tRNA(Asn) + L-glutamine + ATP + H2O = L-asparaginyl-tRNA(Asn) + L-glutamate + ADP + phosphate + 2 H(+). Allows the formation of correctly charged Asn-tRNA(Asn) or Gln-tRNA(Gln) through the transamidation of misacylated Asp-tRNA(Asn) or Glu-tRNA(Gln) in organisms which lack either or both of asparaginyl-tRNA or glutaminyl-tRNA synthetases. The reaction takes place in the presence of glutamine and ATP through an activated phospho-Asp-tRNA(Asn) or phospho-Glu-tRNA(Gln). The polypeptide is Aspartyl/glutamyl-tRNA(Asn/Gln) amidotransferase subunit C (Leptospira borgpetersenii serovar Hardjo-bovis (strain JB197)).